Consider the following 305-residue polypeptide: MPLNLPDKLPAIELLKEENIFVIDNSRATQQDIRPLRIVILNLMPLKITTETDLVRLLSNTPLQVEISFMKIKSHTSKNTPIEHMKTFYTDFDKMREDRYDGMIITGAPVEQMEFEEVNYWDEITEIFDWARTHVTSTLYICWAAQAGLYHHYGIPKYALDKKMFGIFKHRTLLPLHPIFRGFDDEFYVPHSRHTEVRKEDILKVPELTLLSESDDSGVYMVVARGGREFFVTGHSEYSPLTLDTEYRRDVSKGLPIEIPRNYYVNDDPDKGPLVRWRGHANLLFSNWLNYFVYQETPYNIEDIR.

Catalysis depends on cysteine 142, which acts as the Acyl-thioester intermediate. 2 residues coordinate substrate: lysine 163 and serine 192. Catalysis depends on histidine 235, which acts as the Proton acceptor. Glutamate 237 is a catalytic residue. Arginine 249 is a substrate binding site.

The protein belongs to the MetA family.

Its subcellular location is the cytoplasm. It catalyses the reaction L-homoserine + acetyl-CoA = O-acetyl-L-homoserine + CoA. The protein operates within amino-acid biosynthesis; L-methionine biosynthesis via de novo pathway; O-acetyl-L-homoserine from L-homoserine: step 1/1. In terms of biological role, transfers an acetyl group from acetyl-CoA to L-homoserine, forming acetyl-L-homoserine. The polypeptide is Homoserine O-acetyltransferase (Bacteroides fragilis (strain ATCC 25285 / DSM 2151 / CCUG 4856 / JCM 11019 / LMG 10263 / NCTC 9343 / Onslow / VPI 2553 / EN-2)).